We begin with the raw amino-acid sequence, 115 residues long: DNA-directed RNA polymerase subunit Rpo4 (115 aa).

It belongs to the eukaryotic RPB4 RNA polymerase subunit family. In terms of assembly, part of the RNA polymerase complex. Forms a stalk with Rpo7 that extends from the main structure.

The protein resides in the cytoplasm. It catalyses the reaction RNA(n) + a ribonucleoside 5'-triphosphate = RNA(n+1) + diphosphate. Its function is as follows. DNA-dependent RNA polymerase (RNAP) catalyzes the transcription of DNA into RNA using the four ribonucleoside triphosphates as substrates. This subunit is less well bound than the others. The polypeptide is DNA-directed RNA polymerase subunit Rpo4 (Methanocaldococcus jannaschii (strain ATCC 43067 / DSM 2661 / JAL-1 / JCM 10045 / NBRC 100440) (Methanococcus jannaschii)).